The primary structure comprises 413 residues: Amino acid transporter AVT3B (413 aa).

Residues 1–27 (MGLEEQGRAREDTPLLGKGRPLSSKFK) are Cytoplasmic-facing. The chain crosses the membrane as a helical span at residues 28–48 (TFANVFIAIVGAGVLGLPYAF). The Vacuolar segment spans residues 49–54 (KRTGWL). The helical transmembrane segment at 55-75 (MGLLTLFSVAALINHCMMLLV) threads the bilayer. Residues 76–103 (HIRRKLGVSNIGSFGDLGFAACGNLGRF) are Cytoplasmic-facing. The chain crosses the membrane as a helical span at residues 104-124 (VVDILIILSQAGFCVGYLIFI). Topologically, residues 125–145 (GNTLANLSKPTKSTTLMSLRH) are vacuolar. A helical membrane pass occupies residues 146–166 (LMGVSPKSLYIWGCFPFQLGL). At 167-174 (NSIKTLTH) the chain is on the cytoplasmic side. A helical membrane pass occupies residues 175–195 (LAPLSIFADVVDLGAMAVVIV). Residues 196–207 (EDIKITVVQRPQ) lie on the Vacuolar side of the membrane. The helical transmembrane segment at 208 to 228 (VVAFGGMSVFFYGMGVAVYAF) threads the bilayer. Topologically, residues 229–249 (EGVGMVLPLESETKDKDKFGK) are cytoplasmic. A helical membrane pass occupies residues 250–270 (VLALSMLFIAVMYGSFGVLGY). The Vacuolar portion of the chain corresponds to 271 to 288 (MAFGDDTMDIITANLGAG). Residues 289–309 (VVSSLVQLGLCINLFFTFPLM) form a helical membrane-spanning segment. Residues 310–331 (MNPVFEIVERRFWSGMYCVWLR) are Cytoplasmic-facing. Residues 332–352 (WLLVLAVTLVALLVPNFADFL) traverse the membrane as a helical segment. The Vacuolar segment spans residues 353-355 (SLV). Residues 356–376 (GSSVCCALGFVLPSLFHLMVF) traverse the membrane as a helical segment. Residues 377–390 (KDEMEWKQRALDVG) lie on the Cytoplasmic side of the membrane. The chain crosses the membrane as a helical span at residues 391–411 (ILLLGVILGVSGTWSSLTEIF). The Vacuolar segment spans residues 412-413 (QE).

This sequence belongs to the amino acid/polyamine transporter 2 family. Amino acid/auxin permease (AAAP) (TC 2.A.18.8) subfamily. As to expression, ubiquitous.

It is found in the vacuole membrane. Translocates preferentially neutral amino acids from the vacuole to the cytoplasm. This is Amino acid transporter AVT3B from Arabidopsis thaliana (Mouse-ear cress).